Here is a 383-residue protein sequence, read N- to C-terminus: Micronemal protein 3 (383 aa).

Positions 1–26 (MRGGTSALLHALTFSGAVWMCTPAEA) are cleaved as a signal peptide. The propeptide at 27-66 (LPIQKSVQLGSFDKVVPSREVVSESLAPSFAVTETHSSVQ) is required for proper sorting to micronemes. A lectin-like; required for the binding of host cells region spans residues 67–145 (SPSKQETQLC…HPDKSYGGDC (79 aa)). Required for proper sorting to micronemes stretches follow at residues 146–189 (SCEK…SEDP), 190–236 (CSKR…KRTG), and 237–290 (CHAF…LAEK). In terms of domain architecture, EGF-like spans 186 to 227 (SEDPCSKRGNAKCGPNGTCIVVDSVSYTCTCGDGETLVNLPE). Disulfide bonds link Cys190–Cys204 and Cys198–Cys214. The N-linked (GlcNAc...) asparagine glycan is linked to Asn201. Residues 294 to 359 (EFGISASSCK…HTVTCEKIKH (66 aa)) are involved in dimerization.

Homodimer; dimerization is likely required for host cell binding but not for trafficking to micronemes. In terms of processing, removal of the propeptide occurs in a post-medial-Golgi compartment. Removal of the propeptide is required for the host cell binding. The presence of propeptide does not affect dimerization. The presence of propeptide does not affect sorting to micronemes.

Its subcellular location is the cytoplasmic vesicle. It is found in the secretory vesicle. The protein localises to the microneme. The protein resides in the secreted. It localises to the golgi apparatus. Its subcellular location is the endoplasmic reticulum. In terms of biological role, adhesin; can bind both the host cells and the parasites. May be involved in parasite invasion by acting as a bridge between the parasite and the host cell. Triggers innate immune responses in mouse macrophages via the TLR11/MyD88/NF-kappa-B pathway. Induces TNF/TNF-alpha secretion in mouse macrophages. Induces secretion of IL6 in mouse and human macrophages likely via different mechanisms. Up-regulates expression of NOS2/iNOS in mouse macrophages. Induces mouse macrophage polarization. In Toxoplasma gondii, this protein is Micronemal protein 3.